Reading from the N-terminus, the 367-residue chain is B2 bradykinin receptor (367 aa).

At 1-36 (MLNLTSQVPEPALNGTLPQSSSCFHSDWWNWLNTIQ) the chain is on the extracellular side. N-linked (GlcNAc...) asparagine glycans are attached at residues Asn3 and Asn14. Residues 37 to 60 (APFLWVLFLLAALENIFVLSVFCL) form a helical membrane-spanning segment. Over 61–69 (HKNSCTVAE) the chain is Cytoplasmic. Residues 70 to 94 (IYLGNLAMADLILALGLPFWAITIA) traverse the membrane as a helical segment. Topologically, residues 95–107 (NHFDWLFGEVLCR) are extracellular. Cys106 and Cys187 are disulfide-bonded. The chain crosses the membrane as a helical span at residues 108 to 129 (VVNTMIYMNLYSSICFLMLVSI). At 130–151 (DRYLALVKTMSMGRMRGVRWAK) the chain is on the cytoplasmic side. Tyr132 is modified (phosphotyrosine). Residues 152 to 174 (LYSLVIWGCTLLLSSPMLAFRTM) traverse the membrane as a helical segment. Over 175–197 (HEYAAEGHNVTACIIKYPSRSWM) the chain is Extracellular. N-linked (GlcNAc...) asparagine glycosylation occurs at Asn183. A helical transmembrane segment spans residues 198-224 (VFTNILLNSVGFLLPLSIITYCTVQIL). The Cytoplasmic segment spans residues 225 to 243 (QVLRNNEMQKFKEIQTERK). The helical transmembrane segment at 244–268 (ATVLVLAVLLLFVVCWLPFQISTFL) threads the bilayer. At 269-287 (DTLLRLGVLSGCWDEHAVD) the chain is on the extracellular side. The chain crosses the membrane as a helical span at residues 288–311 (VITQISSYVAYSNSGLNPLVYVIV). At 312-367 (GKRFRKKSREVYRVLCQKGGCMGEPVQMENSMGTLRTSISVERQIHKLQDWAGKKQ) the chain is on the cytoplasmic side. Residue Tyr323 is modified to Phosphotyrosine. Residue Cys327 is the site of S-palmitoyl cysteine attachment. Phosphoserine is present on Ser342. Thr345 is subject to Phosphothreonine. Ser349 and Ser351 each carry phosphoserine; by GRK6.

It belongs to the G-protein coupled receptor 1 family. Bradykinin receptor subfamily. BDKRB2 sub-subfamily. Forms a complex with PECAM1 and GNAQ. Interacts with PECAM1.

It is found in the cell membrane. Receptor for bradykinin. It is associated with G proteins that activate a phosphatidylinositol-calcium second messenger system. This Sus scrofa (Pig) protein is B2 bradykinin receptor (BDKRB2).